Here is a 337-residue protein sequence, read N- to C-terminus: Protein SphX (337 aa).

A signal peptide spans Met-1 to Ala-30.

The protein belongs to the PstS family. Post-translationally, the N-terminus is blocked.

It is found in the cell inner membrane. Its function is as follows. May be involved in the system for phosphate transport across the cytoplasmic membrane. The polypeptide is Protein SphX (sphX) (Synechococcus elongatus (strain ATCC 33912 / PCC 7942 / FACHB-805) (Anacystis nidulans R2)).